The chain runs to 205 residues: Recombination protein RecR (205 aa).

A C4-type zinc finger spans residues 59-74 (CARCNTFCEGGLCDIC). The Toprim domain maps to 82–177 (RRLMVVHMPA…KVSRLSQGIP (96 aa)).

The protein belongs to the RecR family.

Functionally, may play a role in DNA repair. It seems to be involved in an RecBC-independent recombinational process of DNA repair. It may act with RecF and RecO. The polypeptide is Recombination protein RecR (Neisseria gonorrhoeae (strain ATCC 700825 / FA 1090)).